A 1028-amino-acid polypeptide reads, in one-letter code: Carbamoyl phosphate synthase large chain (1028 aa).

Positions 1-409 (MPPRRDLKKI…ALMKALRGLE (409 aa)) are carboxyphosphate synthetic domain. ATP-binding residues include R129, R169, G175, G176, E208, V210, E215, G241, V242, H243, Q285, and E299. One can recognise an ATP-grasp 1 domain in the interval 133-328 (QEAMRRIDLE…IAKIAALLAV (196 aa)). Mg(2+) contacts are provided by Q285, E299, and N301. Positions 285, 299, and 301 each coordinate Mn(2+). Residues 410–549 (RDVRALAGVR…YSTYELEDEV (140 aa)) form an oligomerization domain region. Residues 550-933 (WPSQKPKVVI…AYYKAELGAG (384 aa)) are carbamoyl phosphate synthetic domain. Residues 674–866 (HALCQRLGIP…LAKLAALIAV (193 aa)) form the ATP-grasp 2 domain. ATP-binding residues include R710, R750, L752, E757, G782, V783, H784, S785, Q825, and E837. Mg(2+)-binding residues include Q825, E837, and N839. Residues Q825, E837, and N839 each contribute to the Mn(2+) site. The 95-residue stretch at 934-1028 (QRLPLSGQVR…QDWHQKAPRG (95 aa)) folds into the MGS-like domain. The interval 934 to 1028 (QRLPLSGQVR…QDWHQKAPRG (95 aa)) is allosteric domain.

The protein belongs to the CarB family. In terms of assembly, composed of two chains; the small (or glutamine) chain promotes the hydrolysis of glutamine to ammonia, which is used by the large (or ammonia) chain to synthesize carbamoyl phosphate. Tetramer of heterodimers (alpha,beta)4. It depends on Mg(2+) as a cofactor. Mn(2+) is required as a cofactor.

It carries out the reaction hydrogencarbonate + L-glutamine + 2 ATP + H2O = carbamoyl phosphate + L-glutamate + 2 ADP + phosphate + 2 H(+). The enzyme catalyses hydrogencarbonate + NH4(+) + 2 ATP = carbamoyl phosphate + 2 ADP + phosphate + 2 H(+). It participates in amino-acid biosynthesis; L-arginine biosynthesis; carbamoyl phosphate from bicarbonate: step 1/1. The protein operates within pyrimidine metabolism; UMP biosynthesis via de novo pathway; (S)-dihydroorotate from bicarbonate: step 1/3. In terms of biological role, large subunit of the glutamine-dependent carbamoyl phosphate synthetase (CPSase). CPSase catalyzes the formation of carbamoyl phosphate from the ammonia moiety of glutamine, carbonate, and phosphate donated by ATP, constituting the first step of 2 biosynthetic pathways, one leading to arginine and/or urea and the other to pyrimidine nucleotides. The large subunit (synthetase) binds the substrates ammonia (free or transferred from glutamine from the small subunit), hydrogencarbonate and ATP and carries out an ATP-coupled ligase reaction, activating hydrogencarbonate by forming carboxy phosphate which reacts with ammonia to form carbamoyl phosphate. In Thermus thermophilus (strain ATCC BAA-163 / DSM 7039 / HB27), this protein is Carbamoyl phosphate synthase large chain.